The sequence spans 116 residues: Protein Rev (116 aa).

A Phosphoserine; by host CK2 modification is found at S5. The homomultimerization stretch occupies residues 18–26; the sequence is LIKILYQSN. The disordered stretch occupies residues 23–49; that stretch reads YQSNPPPSPEGTRQARRNRRRRWRARQ. The Nuclear localization signal and RNA-binding (RRE) motif lies at 34-50; sequence TRQARRNRRRRWRARQR. Positions 36–49 are enriched in basic residues; it reads QARRNRRRRWRARQ. The short motif at 73-84 is the Nuclear export signal and binding to XPO1 element; it reads LQLPPLERLNLN. Residues 86-116 are disordered; that stretch reads SEDCGTSGTQGVGSPQISVESPTVLESGTEE. A phosphoserine; by host mark is found at S92 and S99.

It belongs to the HIV-1 REV protein family. Homomultimer; when bound to the RRE. Multimeric assembly is essential for activity and may involve XPO1. Binds to human KPNB1, XPO1, TNPO1, RANBP5 and IPO7. Interacts with the viral Integrase. Interacts with human KHDRBS1. Interacts with human NAP1; this interaction decreases Rev multimerization and stimulates its activity. Interacts with human DEAD-box helicases DDX3 and DDX24; these interactions may serve for viral RNA export to the cytoplasm and packaging, respectively. Interacts with human PSIP1; this interaction may inhibit HIV-1 DNA integration by promoting dissociation of the Integrase-LEDGF/p75 complex. Asymmetrically arginine dimethylated at one site by host PRMT6. Methylation impairs the RNA-binding activity and export of viral RNA from the nucleus to the cytoplasm. In terms of processing, phosphorylated by protein kinase CK2. Presence of, and maybe binding to the N-terminus of the regulatory beta subunit of CK2 is necessary for CK2-mediated Rev's phosphorylation.

The protein localises to the host nucleus. The protein resides in the host nucleolus. It localises to the host cytoplasm. Its function is as follows. Escorts unspliced or incompletely spliced viral pre-mRNAs (late transcripts) out of the nucleus of infected cells. These pre-mRNAs carry a recognition sequence called Rev responsive element (RRE) located in the env gene, that is not present in fully spliced viral mRNAs (early transcripts). This function is essential since most viral proteins are translated from unspliced or partially spliced pre-mRNAs which cannot exit the nucleus by the pathway used by fully processed cellular mRNAs. Rev itself is translated from a fully spliced mRNA that readily exits the nucleus. Rev's nuclear localization signal (NLS) binds directly to KPNB1/Importin beta-1 without previous binding to KPNA1/Importin alpha-1. KPNB1 binds to the GDP bound form of RAN (Ran-GDP) and targets Rev to the nucleus. In the nucleus, the conversion from Ran-GDP to Ran-GTP dissociates Rev from KPNB1 and allows Rev's binding to the RRE in viral pre-mRNAs. Rev multimerization on the RRE via cooperative assembly exposes its nuclear export signal (NES) to the surface. Rev can then form a complex with XPO1/CRM1 and Ran-GTP, leading to nuclear export of the complex. Conversion from Ran-GTP to Ran-GDP mediates dissociation of the Rev/RRE/XPO1/RAN complex, so that Rev can return to the nucleus for a subsequent round of export. Beside KPNB1, also seems to interact with TNPO1/Transportin-1, RANBP5/IPO5 and IPO7/RANBP7 for nuclear import. The nucleoporin-like HRB/RIP is an essential cofactor that probably indirectly interacts with Rev to release HIV RNAs from the perinuclear region to the cytoplasm. The polypeptide is Protein Rev (Homo sapiens (Human)).